The primary structure comprises 394 residues: Elongation factor Tu (394 aa).

In terms of domain architecture, tr-type G spans 10–204 (KPHVNVGTIG…ALDSYIPEPE (195 aa)). The tract at residues 19–26 (GHVDHGKT) is G1. Residue 19–26 (GHVDHGKT) coordinates GTP. Mg(2+) is bound at residue threonine 26. The segment at 60-64 (GITIN) is G2. Residues 81 to 84 (DCPG) are G3. GTP is bound by residues 81 to 85 (DCPGH) and 136 to 139 (NKCD). The tract at residues 136 to 139 (NKCD) is G4. Residues 174–176 (SAL) form a G5 region.

Belongs to the TRAFAC class translation factor GTPase superfamily. Classic translation factor GTPase family. EF-Tu/EF-1A subfamily. As to quaternary structure, monomer.

It is found in the cytoplasm. The enzyme catalyses GTP + H2O = GDP + phosphate + H(+). In terms of biological role, GTP hydrolase that promotes the GTP-dependent binding of aminoacyl-tRNA to the A-site of ribosomes during protein biosynthesis. The chain is Elongation factor Tu from Shewanella amazonensis (strain ATCC BAA-1098 / SB2B).